A 428-amino-acid polypeptide reads, in one-letter code: Serine--tRNA ligase (428 aa).

Position 231–233 (231–233 (TAE)) interacts with L-serine. 262-264 (RSE) serves as a coordination point for ATP. E285 contacts L-serine. An ATP-binding site is contributed by 349 to 352 (EISS). Residue S385 participates in L-serine binding.

This sequence belongs to the class-II aminoacyl-tRNA synthetase family. Type-1 seryl-tRNA synthetase subfamily. In terms of assembly, homodimer. The tRNA molecule binds across the dimer.

The protein localises to the cytoplasm. It catalyses the reaction tRNA(Ser) + L-serine + ATP = L-seryl-tRNA(Ser) + AMP + diphosphate + H(+). The enzyme catalyses tRNA(Sec) + L-serine + ATP = L-seryl-tRNA(Sec) + AMP + diphosphate + H(+). Its pathway is aminoacyl-tRNA biosynthesis; selenocysteinyl-tRNA(Sec) biosynthesis; L-seryl-tRNA(Sec) from L-serine and tRNA(Sec): step 1/1. Its function is as follows. Catalyzes the attachment of serine to tRNA(Ser). Is also able to aminoacylate tRNA(Sec) with serine, to form the misacylated tRNA L-seryl-tRNA(Sec), which will be further converted into selenocysteinyl-tRNA(Sec). The protein is Serine--tRNA ligase of Cellvibrio japonicus (strain Ueda107) (Pseudomonas fluorescens subsp. cellulosa).